Consider the following 55-residue polypeptide: Ferredoxin (55 aa).

2 consecutive 4Fe-4S ferredoxin-type domains span residues 2-26 (YKITDECIACGSCADQCPVEAISEG) and 27-55 (SIYEIDEALCTDCGACADQCPVEAIVPED). [4Fe-4S] cluster is bound by residues C8, C11, C14, C18, C36, C39, C42, and C46.

The cofactor is [4Fe-4S] cluster.

In terms of biological role, ferredoxins are iron-sulfur proteins that transfer electrons in a wide variety of metabolic reactions. The protein is Ferredoxin of Butyribacterium methylotrophicum.